Here is a 410-residue protein sequence, read N- to C-terminus: Zinc finger TRAF-type-containing protein 1 (410 aa).

Gly residues predominate over residues 1 to 13; sequence MSGAEEAGGGGPA. The disordered stretch occupies residues 1-22; it reads MSGAEEAGGGGPAAGPAGSVPA. An RING-type; degenerate zinc finger spans residues 117 to 162; that stretch reads CTVCLDLPKASVYQCTNGHLMCAGCFIHLLADARLKEEQATCPNCR. A TRAF-type zinc finger spans residues 158–231; sequence CPNCRCEISK…PWHGPFHELT (74 aa).

Belongs to the ZFTRAF1 family. As to quaternary structure, interacts with LGALS3.

It localises to the cytoplasm. It is found in the perinuclear region. This is Zinc finger TRAF-type-containing protein 1 from Bos taurus (Bovine).